We begin with the raw amino-acid sequence, 378 residues long: MAILCTTTSPAEKEHEPKQDLEKDQTSPLIFNPSLLNLQSQIPNQFIWPDEEKPSIDIPELNVPFIDLSSQDSTLEAPRVIAEACTKHGFFLVVNHGVSESLIADAHRLMESFFDMPLAGKQKAQRKPGESCGYASSFTGRFSTKLPWKETLSFQFSNDNSGSRTVQDYFSDTLGQEFEQFGKVYQDYCEAMSSLSLKIMELLGLSLGVNRDYFRGFFEENDSIMRLNHYPPCQTPDLTLGTGPHCDPSSLTILHQDHVNGLQVFVDNQWQSIRPNPKAFVVNIGDTFMALSNGIFKSCLHRAVVNRESARKSMAFFLCPKKDKVVKPPSDILEKMKTRKYPDFTWSMFLEFTQKHYRADVNTLDSFSNWVITNNNPI.

Polar residues predominate over residues 1 to 10 (MAILCTTTSP). Residues 1–26 (MAILCTTTSPAEKEHEPKQDLEKDQT) form a disordered region. Over residues 11–25 (AEKEHEPKQDLEKDQ) the composition is skewed to basic and acidic residues. The Fe2OG dioxygenase domain maps to 220-320 (ENDSIMRLNH…RKSMAFFLCP (101 aa)). Fe cation contacts are provided by His-245, Asp-247, and His-301. The active site involves Arg-311.

It belongs to the iron/ascorbate-dependent oxidoreductase family. GA20OX subfamily. Fe(2+) serves as cofactor. Requires L-ascorbate as cofactor. As to expression, expressed in inflorescence and developing siliques. Detected in seeds, roots, cotyledons and leaves. In seeds, specifically detected at the rim of the embryo and the outer integument.

The enzyme catalyses gibberellin A12 + 2 2-oxoglutarate + 3 O2 + H(+) = gibberellin A9 + 2 succinate + 3 CO2 + 2 H2O. It carries out the reaction gibberellin A12 + 2-oxoglutarate + O2 = gibberellin A15 + succinate + CO2. The catalysed reaction is gibberellin A15 + 2-oxoglutarate + O2 = gibberellin A24 + succinate + CO2 + H2O. It catalyses the reaction gibberellin A53 + 2-oxoglutarate + O2 = gibberellin A44 + succinate + CO2. The enzyme catalyses gibberellin A12 + 3 2-oxoglutarate + 3 O2 = gibberellin A25 + 3 succinate + 3 CO2 + H2O + H(+). The protein operates within plant hormone biosynthesis; gibberellin biosynthesis. Functionally, key oxidase enzyme in the biosynthesis of gibberellin that catalyzes the conversion of GA12 to GA9, via a three-step oxidation at C-20 of the GA skeleton, and GA25 is also formed as a minor product. GA53 is less effectively oxidized than GA12 and is only oxidized one step to GA44. Involved in the promotion of the floral transition, fertility and silique elongation, but plays only a minor role in elongation of seedling organs. Acts redundantly with GA20OX1. The sequence is that of Gibberellin 20 oxidase 2 (GA20OX2) from Arabidopsis thaliana (Mouse-ear cress).